The primary structure comprises 530 residues: Apolipoprotein N-acyltransferase (530 aa).

The next 6 membrane-spanning stretches (helical) occupy residues 19–39 (LIAG…PGLL), 65–85 (WLAG…AFLV), 96–116 (FAVT…ALLY), 128–148 (LTFA…LTGF), 169–189 (LVGA…PAVW), and 197–217 (AATG…AIAL). One can recognise a CN hydrolase domain in the interval 232-485 (VQADIKQDLK…SGVIDAQIPG (254 aa)). Glutamate 274 functions as the Proton acceptor in the catalytic mechanism. Residue lysine 343 is part of the active site. The active-site Nucleophile is cysteine 396.

It belongs to the CN hydrolase family. Apolipoprotein N-acyltransferase subfamily.

The protein resides in the cell inner membrane. It carries out the reaction N-terminal S-1,2-diacyl-sn-glyceryl-L-cysteinyl-[lipoprotein] + a glycerophospholipid = N-acyl-S-1,2-diacyl-sn-glyceryl-L-cysteinyl-[lipoprotein] + a 2-acyl-sn-glycero-3-phospholipid + H(+). It participates in protein modification; lipoprotein biosynthesis (N-acyl transfer). In terms of biological role, catalyzes the phospholipid dependent N-acylation of the N-terminal cysteine of apolipoprotein, the last step in lipoprotein maturation. This chain is Apolipoprotein N-acyltransferase, found in Caulobacter vibrioides (strain ATCC 19089 / CIP 103742 / CB 15) (Caulobacter crescentus).